We begin with the raw amino-acid sequence, 104 residues long: Large ribosomal subunit protein uL23 (104 aa).

It belongs to the universal ribosomal protein uL23 family. As to quaternary structure, part of the 50S ribosomal subunit. Contacts protein L29, and trigger factor when it is bound to the ribosome.

One of the early assembly proteins it binds 23S rRNA. One of the proteins that surrounds the polypeptide exit tunnel on the outside of the ribosome. Forms the main docking site for trigger factor binding to the ribosome. The sequence is that of Large ribosomal subunit protein uL23 from Leptospira borgpetersenii serovar Hardjo-bovis (strain JB197).